The chain runs to 388 residues: Chorismate synthase (388 aa).

Residues R39 and R45 each coordinate NADP(+). FMN contacts are provided by residues 132–134, 251–252, G296, 311–315, and R337; these read RSS, NA, and KPIPT.

Belongs to the chorismate synthase family. As to quaternary structure, homotetramer. FMNH2 is required as a cofactor.

The catalysed reaction is 5-O-(1-carboxyvinyl)-3-phosphoshikimate = chorismate + phosphate. The protein operates within metabolic intermediate biosynthesis; chorismate biosynthesis; chorismate from D-erythrose 4-phosphate and phosphoenolpyruvate: step 7/7. Its function is as follows. Catalyzes the anti-1,4-elimination of the C-3 phosphate and the C-6 proR hydrogen from 5-enolpyruvylshikimate-3-phosphate (EPSP) to yield chorismate, which is the branch point compound that serves as the starting substrate for the three terminal pathways of aromatic amino acid biosynthesis. This reaction introduces a second double bond into the aromatic ring system. This chain is Chorismate synthase, found in Staphylococcus haemolyticus (strain JCSC1435).